Consider the following 231-residue polypeptide: Cytochrome c oxidase subunit 2 (231 aa).

The Mitochondrial intermembrane segment spans residues 1 to 14 (MAHPAQLGLQNATS). A helical transmembrane segment spans residues 15–45 (PIMEELIAFHDHALMIIFLISSLVLYIISLM). Residues 46 to 59 (LTTKLTHTSTMNAQ) are Mitochondrial matrix-facing. A helical transmembrane segment spans residues 60–87 (EIEMVWTILPAIILIMIALPSLRILYMT). The Mitochondrial intermembrane segment spans residues 88–231 (DEFNKPYLTL…WASYLYIVSL (144 aa)). Cu cation is bound by residues His-161, Cys-196, Glu-198, Cys-200, His-204, and Met-207. Residue Glu-198 participates in Mg(2+) binding.

It belongs to the cytochrome c oxidase subunit 2 family. As to quaternary structure, component of the cytochrome c oxidase (complex IV, CIV), a multisubunit enzyme composed of 14 subunits. The complex is composed of a catalytic core of 3 subunits MT-CO1, MT-CO2 and MT-CO3, encoded in the mitochondrial DNA, and 11 supernumerary subunits COX4I, COX5A, COX5B, COX6A, COX6B, COX6C, COX7A, COX7B, COX7C, COX8 and NDUFA4, which are encoded in the nuclear genome. The complex exists as a monomer or a dimer and forms supercomplexes (SCs) in the inner mitochondrial membrane with NADH-ubiquinone oxidoreductase (complex I, CI) and ubiquinol-cytochrome c oxidoreductase (cytochrome b-c1 complex, complex III, CIII), resulting in different assemblies (supercomplex SCI(1)III(2)IV(1) and megacomplex MCI(2)III(2)IV(2)). Found in a complex with TMEM177, COA6, COX18, COX20, SCO1 and SCO2. Interacts with TMEM177 in a COX20-dependent manner. Interacts with COX20. Interacts with COX16. The cofactor is Cu cation.

Its subcellular location is the mitochondrion inner membrane. The catalysed reaction is 4 Fe(II)-[cytochrome c] + O2 + 8 H(+)(in) = 4 Fe(III)-[cytochrome c] + 2 H2O + 4 H(+)(out). Component of the cytochrome c oxidase, the last enzyme in the mitochondrial electron transport chain which drives oxidative phosphorylation. The respiratory chain contains 3 multisubunit complexes succinate dehydrogenase (complex II, CII), ubiquinol-cytochrome c oxidoreductase (cytochrome b-c1 complex, complex III, CIII) and cytochrome c oxidase (complex IV, CIV), that cooperate to transfer electrons derived from NADH and succinate to molecular oxygen, creating an electrochemical gradient over the inner membrane that drives transmembrane transport and the ATP synthase. Cytochrome c oxidase is the component of the respiratory chain that catalyzes the reduction of oxygen to water. Electrons originating from reduced cytochrome c in the intermembrane space (IMS) are transferred via the dinuclear copper A center (CU(A)) of subunit 2 and heme A of subunit 1 to the active site in subunit 1, a binuclear center (BNC) formed by heme A3 and copper B (CU(B)). The BNC reduces molecular oxygen to 2 water molecules using 4 electrons from cytochrome c in the IMS and 4 protons from the mitochondrial matrix. In Lagothrix lagotricha (Brown woolly monkey), this protein is Cytochrome c oxidase subunit 2 (MT-CO2).